The chain runs to 554 residues: Formate--tetrahydrofolate ligase (554 aa).

Residue 63-70 (TPAGEGKT) participates in ATP binding.

It belongs to the formate--tetrahydrofolate ligase family.

It catalyses the reaction (6S)-5,6,7,8-tetrahydrofolate + formate + ATP = (6R)-10-formyltetrahydrofolate + ADP + phosphate. The protein operates within one-carbon metabolism; tetrahydrofolate interconversion. The protein is Formate--tetrahydrofolate ligase of Halothermothrix orenii (strain H 168 / OCM 544 / DSM 9562).